The chain runs to 137 residues: Large ribosomal subunit protein uL16 (137 aa).

Belongs to the universal ribosomal protein uL16 family. Part of the 50S ribosomal subunit.

Binds 23S rRNA and is also seen to make contacts with the A and possibly P site tRNAs. The polypeptide is Large ribosomal subunit protein uL16 (Brucella abortus (strain S19)).